We begin with the raw amino-acid sequence, 258 residues long: UPF0246 protein mma_1385 (258 aa).

Belongs to the UPF0246 family.

The chain is UPF0246 protein mma_1385 from Janthinobacterium sp. (strain Marseille) (Minibacterium massiliensis).